A 309-amino-acid chain; its full sequence is Taste receptor type 2 member 31 (309 aa).

Residues 1-2 lie on the Extracellular side of the membrane; the sequence is MT. A helical transmembrane segment spans residues 3 to 23; the sequence is TFIPIIFSSLVVVIFVIGNFA. Over 24-55 the chain is Cytoplasmic; the sequence is NGFIALVNSIEWFKRQKISFADQILTALAVSR. A helical membrane pass occupies residues 56–76; the sequence is VGLLWVLLLNWYSTVLNPAFY. Topologically, residues 77–100 are extracellular; that stretch reads SVEVRTTAYNVWAVTGHFSNWLAT. Residues 101-121 form a helical membrane-spanning segment; it reads SLSIFYLLKIANFSNLIFLHL. The Cytoplasmic segment spans residues 122–126; the sequence is KRRVK. A helical transmembrane segment spans residues 127–147; that stretch reads SVILVMLLGPLLFLACQLFMI. The Extracellular portion of the chain corresponds to 148-181; the sequence is NMKEIVRTKEYEGNMTWKIKLRSAVYLSDATVTT. An N-linked (GlcNAc...) asparagine glycan is attached at N161. The chain crosses the membrane as a helical span at residues 182-202; sequence LGNLVPFTLTLLCFLLLICSL. The Cytoplasmic portion of the chain corresponds to 203-229; that stretch reads CKHLKKMQLHGKGSQDPSTKVHIKVLQ. Residues 230 to 250 form a helical membrane-spanning segment; the sequence is TVISFLLLCAIYFLSIMISVW. Residues 251-259 are Extracellular-facing; it reads SFGSLKNKP. The chain crosses the membrane as a helical span at residues 260–280; the sequence is VFMFCKAMRFSYPSIHPFILI. At 281–309 the chain is on the cytoplasmic side; sequence WGNKKLKQTFLSVLRQVRYWVKGEKPSSP.

Belongs to the G-protein coupled receptor T2R family.

The protein resides in the membrane. Receptor that may play a role in the perception of bitterness and is gustducin-linked. May play a role in sensing the chemical composition of the gastrointestinal content. The activity of this receptor may stimulate alpha gustducin, mediate PLC-beta-2 activation and lead to the gating of TRPM5. This Pan troglodytes (Chimpanzee) protein is Taste receptor type 2 member 31 (TAS2R31).